The sequence spans 266 residues: MPDITLTTLQSLKLKGEKITMLTCYDATFAHASCQAGIEVLLVGDSLGMVLQGNDSTLPVTTDELAYHTASVKRGNDGAFIIADLPFMGYATLEQTFQNAGKLMQAGAHMIKVEGAVWLAESIRLLAERGVPVCAHMGLTPQSVNLLGGYKVQGRNEAQARQMRADAIALEQAGAAMILLECVPSELAAEITQAVKVPVIGIGAGSATDGQVLVLHDMLGLSITGRVPKFVKNFMTGQASIHDALSAYVAEVKGVTFPGAEHGFSA.

The Mg(2+) site is built by aspartate 45 and aspartate 84. Residues 45–46, aspartate 84, and lysine 112 each bind 3-methyl-2-oxobutanoate; that span reads DS. Glutamate 114 serves as a coordination point for Mg(2+). The Proton acceptor role is filled by glutamate 181.

It belongs to the PanB family. In terms of assembly, homodecamer; pentamer of dimers. Requires Mg(2+) as cofactor.

It is found in the cytoplasm. The enzyme catalyses 3-methyl-2-oxobutanoate + (6R)-5,10-methylene-5,6,7,8-tetrahydrofolate + H2O = 2-dehydropantoate + (6S)-5,6,7,8-tetrahydrofolate. The protein operates within cofactor biosynthesis; (R)-pantothenate biosynthesis; (R)-pantoate from 3-methyl-2-oxobutanoate: step 1/2. Catalyzes the reversible reaction in which hydroxymethyl group from 5,10-methylenetetrahydrofolate is transferred onto alpha-ketoisovalerate to form ketopantoate. The protein is 3-methyl-2-oxobutanoate hydroxymethyltransferase of Pseudomonas fluorescens (strain SBW25).